The following is a 509-amino-acid chain: Lysine--tRNA ligase (509 aa).

Glu418 and Glu425 together coordinate Mg(2+).

Belongs to the class-II aminoacyl-tRNA synthetase family. In terms of assembly, homodimer. Requires Mg(2+) as cofactor.

The protein localises to the cytoplasm. The enzyme catalyses tRNA(Lys) + L-lysine + ATP = L-lysyl-tRNA(Lys) + AMP + diphosphate. This Acinetobacter baumannii (strain ATCC 17978 / DSM 105126 / CIP 53.77 / LMG 1025 / NCDC KC755 / 5377) protein is Lysine--tRNA ligase.